Reading from the N-terminus, the 261-residue chain is Imidazole glycerol phosphate synthase subunit HisF (261 aa).

Active-site residues include Asp-11 and Asp-130.

It belongs to the HisA/HisF family. Heterodimer of HisH and HisF.

Its subcellular location is the cytoplasm. It carries out the reaction 5-[(5-phospho-1-deoxy-D-ribulos-1-ylimino)methylamino]-1-(5-phospho-beta-D-ribosyl)imidazole-4-carboxamide + L-glutamine = D-erythro-1-(imidazol-4-yl)glycerol 3-phosphate + 5-amino-1-(5-phospho-beta-D-ribosyl)imidazole-4-carboxamide + L-glutamate + H(+). Its pathway is amino-acid biosynthesis; L-histidine biosynthesis; L-histidine from 5-phospho-alpha-D-ribose 1-diphosphate: step 5/9. Functionally, IGPS catalyzes the conversion of PRFAR and glutamine to IGP, AICAR and glutamate. The HisF subunit catalyzes the cyclization activity that produces IGP and AICAR from PRFAR using the ammonia provided by the HisH subunit. The sequence is that of Imidazole glycerol phosphate synthase subunit HisF from Limosilactobacillus fermentum (strain NBRC 3956 / LMG 18251) (Lactobacillus fermentum).